The primary structure comprises 121 residues: NADH-quinone oxidoreductase subunit A 2 (121 aa).

3 helical membrane passes run 6–26 (FLPV…TLFV), 60–80 (VPFF…MFLF), and 89–109 (IGFV…VGFA).

The protein belongs to the complex I subunit 3 family. In terms of assembly, NDH-1 is composed of 14 different subunits. Subunits NuoA, H, J, K, L, M, N constitute the membrane sector of the complex.

The protein resides in the cell inner membrane. It catalyses the reaction a quinone + NADH + 5 H(+)(in) = a quinol + NAD(+) + 4 H(+)(out). Functionally, NDH-1 shuttles electrons from NADH, via FMN and iron-sulfur (Fe-S) centers, to quinones in the respiratory chain. The immediate electron acceptor for the enzyme in this species is believed to be ubiquinone. Couples the redox reaction to proton translocation (for every two electrons transferred, four hydrogen ions are translocated across the cytoplasmic membrane), and thus conserves the redox energy in a proton gradient. In Rhizobium meliloti (strain 1021) (Ensifer meliloti), this protein is NADH-quinone oxidoreductase subunit A 2.